Consider the following 455-residue polypeptide: Ribosomal protein uS12 methylthiotransferase RimO (455 aa).

The MTTase N-terminal domain occupies 1 to 114 (MKYHIVTLGC…INALVGQLER (114 aa)). Cys10, Cys46, Cys78, Cys166, Cys170, and Cys173 together coordinate [4Fe-4S] cluster. One can recognise a Radical SAM core domain in the interval 152 to 383 (THQTPSAYLK…MRLQQTISYT (232 aa)). The region spanning 386–455 (QRWVGRTIKV…AYDLWGEALS (70 aa)) is the TRAM domain.

It belongs to the methylthiotransferase family. RimO subfamily. [4Fe-4S] cluster is required as a cofactor.

The protein resides in the cytoplasm. It catalyses the reaction L-aspartate(89)-[ribosomal protein uS12]-hydrogen + (sulfur carrier)-SH + AH2 + 2 S-adenosyl-L-methionine = 3-methylsulfanyl-L-aspartate(89)-[ribosomal protein uS12]-hydrogen + (sulfur carrier)-H + 5'-deoxyadenosine + L-methionine + A + S-adenosyl-L-homocysteine + 2 H(+). Catalyzes the methylthiolation of an aspartic acid residue of ribosomal protein uS12. This Chloroflexus aurantiacus (strain ATCC 29366 / DSM 635 / J-10-fl) protein is Ribosomal protein uS12 methylthiotransferase RimO.